Here is an 83-residue protein sequence, read N- to C-terminus: Cytochrome b559 subunit alpha (83 aa).

A helical membrane pass occupies residues 21–35; the sequence is VIHSITIPSLFVAGW. H23 provides a ligand contact to heme.

It belongs to the PsbE/PsbF family. In terms of assembly, heterodimer of an alpha subunit and a beta subunit. PSII is composed of 1 copy each of membrane proteins PsbA, PsbB, PsbC, PsbD, PsbE, PsbF, PsbH, PsbI, PsbJ, PsbK, PsbL, PsbM, PsbT, PsbX, PsbY, PsbZ, Psb30/Ycf12, at least 3 peripheral proteins of the oxygen-evolving complex and a large number of cofactors. It forms dimeric complexes. Heme b is required as a cofactor.

Its subcellular location is the plastid. It is found in the chloroplast thylakoid membrane. Its function is as follows. This b-type cytochrome is tightly associated with the reaction center of photosystem II (PSII). PSII is a light-driven water:plastoquinone oxidoreductase that uses light energy to abstract electrons from H(2)O, generating O(2) and a proton gradient subsequently used for ATP formation. It consists of a core antenna complex that captures photons, and an electron transfer chain that converts photonic excitation into a charge separation. The chain is Cytochrome b559 subunit alpha from Nephroselmis olivacea (Green alga).